The sequence spans 165 residues: Phosphopantetheine adenylyltransferase (165 aa).

S10 contributes to the substrate binding site. ATP is bound by residues 10–11 and H18; that span reads SF. Residues K42, L74, and R88 each contribute to the substrate site. Residues 89–91, E99, and 124–130 each bind ATP; these read GLR and YSYLSSS.

This sequence belongs to the bacterial CoaD family. In terms of assembly, homohexamer. Requires Mg(2+) as cofactor.

The protein resides in the cytoplasm. It carries out the reaction (R)-4'-phosphopantetheine + ATP + H(+) = 3'-dephospho-CoA + diphosphate. The protein operates within cofactor biosynthesis; coenzyme A biosynthesis; CoA from (R)-pantothenate: step 4/5. Its function is as follows. Reversibly transfers an adenylyl group from ATP to 4'-phosphopantetheine, yielding dephospho-CoA (dPCoA) and pyrophosphate. The sequence is that of Phosphopantetheine adenylyltransferase from Halalkalibacterium halodurans (strain ATCC BAA-125 / DSM 18197 / FERM 7344 / JCM 9153 / C-125) (Bacillus halodurans).